Consider the following 113-residue polypeptide: U11-theraphotoxin-Hhn1p (113 aa).

An N-terminal signal peptide occupies residues 1–21 (MNTVRVTFLLVFVLAVSLGQA). The propeptide occupies 22–74 (DKDENRMEMQEKTEQGKSYLDFAENLLLQKLEELEAKLLEEDSEESRNSRQKR). The segment at 61 to 83 (EEDSEESRNSRQKRCIGEGVPCD) is disordered. 3 cysteine pairs are disulfide-bonded: cysteine 75–cysteine 90, cysteine 82–cysteine 95, and cysteine 89–cysteine 110.

It belongs to the neurotoxin 14 (magi-1) family. 01 (HNTX-16) subfamily. Expressed by the venom gland.

It is found in the secreted. Probable ion channel inhibitor. This is U11-theraphotoxin-Hhn1p from Cyriopagopus hainanus (Chinese bird spider).